The primary structure comprises 88 residues: Large ribosomal subunit protein eL31 (88 aa).

The protein belongs to the eukaryotic ribosomal protein eL31 family.

This Archaeoglobus fulgidus (strain ATCC 49558 / DSM 4304 / JCM 9628 / NBRC 100126 / VC-16) protein is Large ribosomal subunit protein eL31 (rpl31e).